Here is a 324-residue protein sequence, read N- to C-terminus: Zinc metalloproteinase leucurolysin-B (324 aa).

A Peptidase M12B domain is found at 1-119 (DTVLLNRISH…LNPQCILNEP (119 aa)). Residue Asp-11 coordinates Ca(2+). 3 disulfides stabilise this stretch: Cys-34/Cys-114, Cys-74/Cys-98, and Cys-76/Cys-81. His-59 contacts Zn(2+). Glu-60 is a catalytic residue. Residues His-63 and His-69 each coordinate Zn(2+). N-linked (GlcNAc...) asparagine glycosylation occurs at Asn-97. Ca(2+) is bound by residues Cys-114, Asn-117, Val-129, Asn-132, Leu-134, Glu-136, Glu-139, and Asp-142. Positions 127 to 213 (PPVCGNELLE…QCPTDDFKRN (87 aa)) constitute a Disintegrin domain. Disulfide bonds link Cys-130/Cys-159, Cys-141/Cys-154, Cys-143/Cys-149, Cys-153/Cys-176, Cys-167/Cys-173, Cys-172/Cys-198, Cys-185/Cys-205, Cys-192/Cys-224, Cys-217/Cys-229, Cys-236/Cys-286, Cys-251/Cys-295, Cys-264/Cys-274, and Cys-281/Cys-315. Residues 191–193 (ECD) carry the D/ECD-tripeptide motif. N-linked (GlcNAc...) asparagine glycans are attached at residues Asn-296 and Asn-305.

This sequence belongs to the venom metalloproteinase (M12B) family. P-III subfamily. P-IIIa sub-subfamily. In terms of assembly, monomer. Requires Zn(2+) as cofactor. Post-translationally, N-glycosylated. In terms of processing, the N-terminus is blocked. Expressed by the venom gland.

The protein resides in the secreted. Inhibited by EDTA, but not by PMSF. Pre-incubation with 2 mM DTT completely abolishes activity. In terms of biological role, snake venom zinc metalloproteinase that acts as a potent hemorrhagic toxin. Hydrolyzes the insulin B chain at the 14-Ala-|-Leu-15 bond but not the 16-Tyr-|-Leu-17 bond. Degrades the alpha-chain of fibrin and hydrolyzes the Aalpha-chain of fibrinogen (FGA) while leaving the beta and gamma chains unaffected. Degrades type-I collagen and its gelatin. Degrades the alpha-1 chain of type-IV collagen and its gelatin but not the alpha-2 chain. Degrades plasma fibronectin, plasma vitronectin and basement membrane enactin. It inhibits collagen-induced platelet aggregation. This is Zinc metalloproteinase leucurolysin-B from Bothrops leucurus (Whitetail lancehead).